A 438-amino-acid polypeptide reads, in one-letter code: Protein translocase subunit SecY (438 aa).

The chain crosses the membrane as a helical span at residues 1–43 (MKIKPILELIPEVKRPLKGVSFKEKIQWTGLVLILYFILGTID). Residues 44–54 (IYMGGAEMPAM) are Extracellular-facing. Positions 55–62 (FAFWQTVT) form an intramembrane region, helical. The chain crosses the membrane as a discontinuously helical span at residues 55 to 83 (FAFWQTVTASKMGTLITLGIGPIVTAGII). An intramembrane segment occupies 63–74 (ASKMGTLITLGI). Residues 75 to 83 (GPIVTAGII) constitute an intramembrane region (helical). Over 84–104 (MQLLVGSELISLDLSKPMNRA) the chain is Cytoplasmic. The helical transmembrane segment at 105 to 129 (LFQGLQKLFGIFLCFLEAVMFVGAG) threads the bilayer. Topologically, residues 130-136 (AFGVVNS) are extracellular. A helical transmembrane segment spans residues 137–161 (TLALILVLQLALGAILVIYLDEIVS). The Cytoplasmic segment spans residues 162 to 167 (RYGIGS). The helical transmembrane segment at 168 to 186 (GIGLFIAAGVAQTIFVGAF) threads the bilayer. Over 187–209 (GAEGYLWKFFSAMSVGSLGIAFE) the chain is Extracellular. The helical transmembrane segment at 210-231 (YILPILSTLFVFLVVVYVESIR) threads the bilayer. Residues 232–256 (VEIPLAHGRVKGAVGKYPIKFIYVS) lie on the Cytoplasmic side of the membrane. Residues 257-278 (NLPVILAAALFANIQLWGMFLD) traverse the membrane as a helical segment. Topologically, residues 279-315 (RMGYPILGQYSNGTAVSGIAYYFSTPYGISNIISDPL) are extracellular. Residues 316-335 (HAIFYTLMMVIFCILFGLFW) form a helical membrane-spanning segment. The Cytoplasmic portion of the chain corresponds to 336–378 (VETSGLDAKSMAKKLGNLDMAIKGFRKSQKSIEQRLKRYIKPI). Residues 379-397 (TVMGSAFVGFLAAAADFTG) form a helical membrane-spanning segment. Topologically, residues 398–400 (ALG) are extracellular. A helical membrane pass occupies residues 401-415 (GGTGVLLTVSIVYRL). The Cytoplasmic segment spans residues 416–438 (YEQLVQEQLSELHPAVAKFVGKR).

This sequence belongs to the SecY/SEC61-alpha family. In terms of assembly, component of the Sec protein translocase complex. Heterotrimer consisting of alpha (SecY), beta (SecG) and gamma (SecE) subunits. The heterotrimers can form oligomers, although 1 heterotrimer is thought to be able to translocate proteins. Interacts with the ribosome. May interact with SecDF, and other proteins may be involved.

The protein localises to the cell membrane. Functionally, the central subunit of the protein translocation channel SecYEG. Consists of two halves formed by TMs 1-5 and 6-10. These two domains form a lateral gate at the front which open onto the bilayer between TMs 2 and 7, and are clamped together by SecE at the back. The channel is closed by both a pore ring composed of hydrophobic SecY resides and a short helix (helix 2A) on the extracellular side of the membrane which forms a plug. The plug probably moves laterally to allow the channel to open. The ring and the pore may move independently. The chain is Protein translocase subunit SecY from Methanococcus vannielii.